We begin with the raw amino-acid sequence, 628 residues long: Kelch-like protein 14 (628 aa).

A BTB domain is found at 33-151; that stretch reads CDVTLTAQGQ…LYTANVTLSL (119 aa). The interval 69–115 is disordered; that stretch reads GGGVGGQDGLGAPKDQQQPPQQQPSQQQQPPPQEEPGTPSSSPDDKL. A compositionally biased stretch (low complexity) spans 84-96; it reads QQQPPQQQPSQQQ. The BACK domain occupies 210 to 279; the sequence is VEDVLLLNFE…PAPELVERVQ (70 aa). Kelch repeat units lie at residues 323-372, 373-424, 425-471, 473-518, 520-570, and 572-620; these read MLLL…EVEN, FLFV…RLDK, HLYV…VHNG, IYIS…VMND, LYAI…VLDD, and IYLV…TVIL.

As to quaternary structure, interacts with TOR1A, preferentially with the ATP-free form.

The protein resides in the cytoplasm. It is found in the cytosol. It localises to the endoplasmic reticulum membrane. In Homo sapiens (Human), this protein is Kelch-like protein 14 (KLHL14).